We begin with the raw amino-acid sequence, 164 residues long: Axial regulator YABBY 5 (164 aa).

The C4-type zinc-finger motif lies at 16 to 43; sequence CNFCNIILAVNVPCSSLFDIVTVRCGHC.

The protein belongs to the YABBY family. Binds to LUG and LUH; these complexes promote adaxial cell identity in leaves as well as embryonic shoot apical meristem (SAM) initiation and postembryonic SAM maintenance. Interacts with SPL/NZZ and SPEAR2.

The protein localises to the nucleus. Functionally, promotes adaxial cell identity. Regulates the initiation of embryonic shoot apical meristem (SAM) development. This Arabidopsis thaliana (Mouse-ear cress) protein is Axial regulator YABBY 5 (YAB5).